A 216-amino-acid chain; its full sequence is Somatotropin (216 aa).

Positions 1–26 are cleaved as a signal peptide; sequence MATGSQTSWLLTFTLLCLPWPQEAGA. H45 is a Zn(2+) binding site. An intrachain disulfide couples C78 to C189. At S131 the chain carries Phosphoserine. E198 is a Zn(2+) binding site. C206 and C214 are oxidised to a cystine.

This sequence belongs to the somatotropin/prolactin family.

The protein localises to the secreted. Its function is as follows. Plays an important role in growth control. Its major role in stimulating body growth is to stimulate the liver and other tissues to secrete IGF1. It stimulates both the differentiation and proliferation of myoblasts. It also stimulates amino acid uptake and protein synthesis in muscle and other tissues. The polypeptide is Somatotropin (GH1) (Spalax ehrenbergi (Middle East blind mole rat)).